Reading from the N-terminus, the 786-residue chain is MDAPVPLSLSTLLELCTNLLQKSVNKSNGRFTAQLVHCRVIKSGLMFSVYLMNNLMNVYSKTGYALHARKLFDEMPLRTAFSWNTVLSAYSKRGDMDSTCEFFDQLPQRDSVSWTTMIVGYKNIGQYHKAIRVMGDMVKEGIEPTQFTLTNVLASVAATRCMETGKKVHSFIVKLGLRGNVSVSNSLLNMYAKCGDPMMAKFVFDRMVVRDISSWNAMIALHMQVGQMDLAMAQFEQMAERDIVTWNSMISGFNQRGYDLRALDIFSKMLRDSLLSPDRFTLASVLSACANLEKLCIGKQIHSHIVTTGFDISGIVLNALISMYSRCGGVETARRLIEQRGTKDLKIEGFTALLDGYIKLGDMNQAKNIFVSLKDRDVVAWTAMIVGYEQHGSYGEAINLFRSMVGGGQRPNSYTLAAMLSVASSLASLSHGKQIHGSAVKSGEIYSVSVSNALITMYAKAGNITSASRAFDLIRCERDTVSWTSMIIALAQHGHAEEALELFETMLMEGLRPDHITYVGVFSACTHAGLVNQGRQYFDMMKDVDKIIPTLSHYACMVDLFGRAGLLQEAQEFIEKMPIEPDVVTWGSLLSACRVHKNIDLGKVAAERLLLLEPENSGAYSALANLYSACGKWEEAAKIRKSMKDGRVKKEQGFSWIEVKHKVHVFGVEDGTHPEKNEIYMTMKKIWDEIKKMGYVPDTASVLHDLEEEVKEQILRHHSEKLAIAFGLISTPDKTTLRIMKNLRVCNDCHTAIKFISKLVGREIIVRDTTRFHHFKDGFCSCRDYW.

PPR repeat units follow at residues 48-78, 79-109, 110-144, 145-179, 180-214, 215-241, 242-276, 278-312, 313-347, 350-376, 377-411, 412-446, 447-477, 479-513, 514-548, and 550-580; these read SVYL…MPLR, TAFS…LPQR, DSVS…GIEP, TQFT…GLRG, NVSV…DISS, WNAM…MAER, DIVT…SLLS, DRFT…GFDI, SGIV…DLKI, FTAL…LKDR, DVVA…GQRP, NSYT…GEIY, SVSV…IRCE, DTVS…GLRP, DHIT…DKII, and TLSH…MPIE. Positions 585 to 660 are type E motif; that stretch reads TWGSLLSACR…EQGFSWIEVK (76 aa). The segment at 661–691 is type E(+) motif; the sequence is HKVHVFGVEDGTHPEKNEIYMTMKKIWDEIK. Positions 692 to 786 are type DYW motif; it reads KMGYVPDTAS…DGFCSCRDYW (95 aa).

It belongs to the PPR family. PCMP-H subfamily.

In Arabidopsis thaliana (Mouse-ear cress), this protein is Pentatricopeptide repeat-containing protein At2g22070 (PCMP-H41).